Consider the following 455-residue polypeptide: NADH-quinone oxidoreductase subunit N (455 aa).

11 consecutive transmembrane segments (helical) span residues 25 to 45, 61 to 81, 99 to 119, 149 to 169, 193 to 213, 257 to 277, 285 to 305, 312 to 332, 355 to 375, 391 to 411, and 432 to 452; these read AIVP…ISEY, FSVA…ALSH, VFLL…MFFL, FLMG…IYGA, IGIV…PFHF, IQII…IMAL, MFAF…LLTS, LYYA…VMYV, AGIL…SGFF, IVVF…FKII, and IVAV…NVVL.

This sequence belongs to the complex I subunit 2 family. NDH-1 is composed of 14 different subunits. Subunits NuoA, H, J, K, L, M, N constitute the membrane sector of the complex.

Its subcellular location is the cell inner membrane. The enzyme catalyses a quinone + NADH + 5 H(+)(in) = a quinol + NAD(+) + 4 H(+)(out). In terms of biological role, NDH-1 shuttles electrons from NADH, via FMN and iron-sulfur (Fe-S) centers, to quinones in the respiratory chain. The immediate electron acceptor for the enzyme in this species is believed to be a menaquinone. Couples the redox reaction to proton translocation (for every two electrons transferred, four hydrogen ions are translocated across the cytoplasmic membrane), and thus conserves the redox energy in a proton gradient. The polypeptide is NADH-quinone oxidoreductase subunit N (Flavobacterium psychrophilum (strain ATCC 49511 / DSM 21280 / CIP 103535 / JIP02/86)).